A 180-amino-acid chain; its full sequence is Transcriptional repressor NrdR (180 aa).

A zinc finger spans residues 3 to 34 (CPYCQNTSSRVLESRSTEAGQSIRRRRECLQC). The region spanning 49–139 (ISVLKKDKSK…VYGEFKGITD (91 aa)) is the ATP-cone domain. Residues 148 to 180 (QQEERESSSSPEWSDAGEEATVIEDSSQVMASS) form a disordered region. The segment covering 171–180 (EDSSQVMASS) has biased composition (polar residues).

This sequence belongs to the NrdR family. Zn(2+) serves as cofactor.

Negatively regulates transcription of bacterial ribonucleotide reductase nrd genes and operons by binding to NrdR-boxes. The chain is Transcriptional repressor NrdR from Gloeothece citriformis (strain PCC 7424) (Cyanothece sp. (strain PCC 7424)).